Consider the following 244-residue polypeptide: 27 kDa core protein (244 aa).

This sequence belongs to the chordopoxvirinae D3 family.

The protein resides in the virion. In terms of biological role, late protein which is part of a large complex required for early virion morphogenesis. This complex participates in the formation of virosomes and the incorporation of virosomal contents into nascent immature virions. This chain is 27 kDa core protein, found in Swinepox virus (strain Swine/Nebraska/17077-99/1999) (SWPV).